We begin with the raw amino-acid sequence, 168 residues long: Mitochondrial inner membrane protein SHH4 (168 aa).

A mitochondrion-targeting transit peptide spans 1–23; it reads MSSTKFLKPLCRIRAFHTSIARS. The Mitochondrial matrix segment spans residues 24–65; it reads FTIPFLPKIPQKPGGVSGTANDSSYMPPESRAQGSYHWIVER. The helical transmembrane segment at 66 to 86 threads the bilayer; that stretch reads GLSLAVLPLIAVPLVTTGPIS. The Mitochondrial intermembrane portion of the chain corresponds to 87-92; the sequence is TFTDTF. A helical transmembrane segment spans residues 93-113; the sequence is LSLVLLGHCHIGFQSCIIDYI. Heme is bound at residue cysteine 101. Position 112 (tyrosine 112) interacts with a ubiquinone. At 114-120 the chain is on the mitochondrial matrix side; that stretch reads SERVYGK. Residues 121-141 form a helical membrane-spanning segment; the sequence is VHHYAMYLLSLGSFLSFVGIY. Over 142–168 the chain is Mitochondrial intermembrane; it reads KLESQEAGLIASLKSLWDNKPVEKKRQ.

This sequence belongs to the CybS family. Interacts with SDH3.

It localises to the mitochondrion inner membrane. Functionally, homolog of SDH4, but seems not to be a stoichiometric subunit of either the succinate dehydrogenase (SDH) complex or the mitochondrial inner membrane translocase TIM22 complex. This Saccharomyces cerevisiae (strain ATCC 204508 / S288c) (Baker's yeast) protein is Mitochondrial inner membrane protein SHH4.